Consider the following 203-residue polypeptide: ATP-dependent Clp protease proteolytic subunit (203 aa).

Ser-107 acts as the Nucleophile in catalysis. Residue His-132 is part of the active site.

It belongs to the peptidase S14 family. In terms of assembly, fourteen ClpP subunits assemble into 2 heptameric rings which stack back to back to give a disk-like structure with a central cavity, resembling the structure of eukaryotic proteasomes.

It localises to the cytoplasm. It catalyses the reaction Hydrolysis of proteins to small peptides in the presence of ATP and magnesium. alpha-casein is the usual test substrate. In the absence of ATP, only oligopeptides shorter than five residues are hydrolyzed (such as succinyl-Leu-Tyr-|-NHMec, and Leu-Tyr-Leu-|-Tyr-Trp, in which cleavage of the -Tyr-|-Leu- and -Tyr-|-Trp bonds also occurs).. Functionally, cleaves peptides in various proteins in a process that requires ATP hydrolysis. Has a chymotrypsin-like activity. Plays a major role in the degradation of misfolded proteins. This is ATP-dependent Clp protease proteolytic subunit from Shewanella sediminis (strain HAW-EB3).